A 502-amino-acid polypeptide reads, in one-letter code: Glycerol kinase (502 aa).

Position 16 (Thr16) interacts with ADP. Residues Thr16, Thr17, and Ser18 each coordinate ATP. Thr16 provides a ligand contact to sn-glycerol 3-phosphate. Arg20 lines the ADP pocket. The sn-glycerol 3-phosphate site is built by Arg86, Glu87, Tyr138, and Asp247. The glycerol site is built by Arg86, Glu87, Tyr138, Asp247, and Gln248. ADP is bound by residues Thr269 and Gly312. ATP contacts are provided by Thr269, Gly312, Gln316, and Gly413. ADP is bound by residues Gly413 and Asn417.

This sequence belongs to the FGGY kinase family.

The enzyme catalyses glycerol + ATP = sn-glycerol 3-phosphate + ADP + H(+). The protein operates within polyol metabolism; glycerol degradation via glycerol kinase pathway; sn-glycerol 3-phosphate from glycerol: step 1/1. Its activity is regulated as follows. Inhibited by fructose 1,6-bisphosphate (FBP). Key enzyme in the regulation of glycerol uptake and metabolism. Catalyzes the phosphorylation of glycerol to yield sn-glycerol 3-phosphate. In Dechloromonas aromatica (strain RCB), this protein is Glycerol kinase.